The following is a 153-amino-acid chain: SsrA-binding protein (153 aa).

Belongs to the SmpB family.

It localises to the cytoplasm. In terms of biological role, required for rescue of stalled ribosomes mediated by trans-translation. Binds to transfer-messenger RNA (tmRNA), required for stable association of tmRNA with ribosomes. tmRNA and SmpB together mimic tRNA shape, replacing the anticodon stem-loop with SmpB. tmRNA is encoded by the ssrA gene; the 2 termini fold to resemble tRNA(Ala) and it encodes a 'tag peptide', a short internal open reading frame. During trans-translation Ala-aminoacylated tmRNA acts like a tRNA, entering the A-site of stalled ribosomes, displacing the stalled mRNA. The ribosome then switches to translate the ORF on the tmRNA; the nascent peptide is terminated with the 'tag peptide' encoded by the tmRNA and targeted for degradation. The ribosome is freed to recommence translation, which seems to be the essential function of trans-translation. This chain is SsrA-binding protein, found in Orientia tsutsugamushi (strain Ikeda) (Rickettsia tsutsugamushi).